The following is a 153-amino-acid chain: MQRSKIKVEIKRLSHGEDLSLPCYATTQSAGMDLYAALNDSAVLNPLERLLVPTGIVIAIPNGFEGQIRPRSGLAAKHGITVLNSPGTIDSDYRGEVKICLINLSNQPYEIKRGDRIAQILISPVSQVIWDDREEFCAEETGRNAGGFGSSGR.

Substrate is bound by residues 71 to 73, asparagine 84, 88 to 90, and lysine 98; these read RSG and TID.

This sequence belongs to the dUTPase family. It depends on Mg(2+) as a cofactor.

The catalysed reaction is dUTP + H2O = dUMP + diphosphate + H(+). Its pathway is pyrimidine metabolism; dUMP biosynthesis; dUMP from dCTP (dUTP route): step 2/2. Its function is as follows. This enzyme is involved in nucleotide metabolism: it produces dUMP, the immediate precursor of thymidine nucleotides and it decreases the intracellular concentration of dUTP so that uracil cannot be incorporated into DNA. The sequence is that of Deoxyuridine 5'-triphosphate nucleotidohydrolase from Wolbachia pipientis wMel.